The primary structure comprises 201 residues: Protease (201 aa).

Catalysis depends on residues His56, Asp73, and Cys121.

The protein belongs to the peptidase C5 family. Interacts with protease cofactor pVI-C; this interaction is necessary for protease activation.

The protein resides in the virion. The protein localises to the host nucleus. It carries out the reaction Cleaves proteins of the adenovirus and its host cell at two consensus sites: -Yaa-Xaa-Gly-Gly-|-Xaa- and -Yaa-Xaa-Gly-Xaa-|-Gly- (in which Yaa is Met, Ile or Leu, and Xaa is any amino acid).. With respect to regulation, requires DNA and protease cofactor for maximal activation. Inside nascent virions, becomes partially activated by binding to the viral DNA, allowing it to cleave the cofactor that binds to the protease and fully activates it. Actin, like the viral protease cofactor, seems to act as a cofactor in the cleavage of cytokeratin 18 and of actin itself. Functionally, cleaves viral precursor proteins (pTP, pIIIa, pVI, pVII, pVIII, and pX) inside newly assembled particles giving rise to mature virions. Protease complexed to its cofactor slides along the viral DNA to specifically locate and cleave the viral precursors. Mature virions have a weakened organization compared to the unmature virions, thereby facilitating subsequent uncoating. Without maturation, the particle lacks infectivity and is unable to uncoat. Late in adenovirus infection, in the cytoplasm, may participate in the cytoskeleton destruction. Cleaves host cell cytoskeletal keratins K7 and K18. This Homo sapiens (Human) protein is Protease.